We begin with the raw amino-acid sequence, 248 residues long: Sulfur carrier protein FdhD (248 aa).

Cysteine 99 serves as the catalytic Cysteine persulfide intermediate. Position 232–237 (232–237 (FVRGKR)) interacts with Mo-bis(molybdopterin guanine dinucleotide).

This sequence belongs to the FdhD family.

It localises to the cytoplasm. In terms of biological role, required for formate dehydrogenase (FDH) activity. Acts as a sulfur carrier protein that transfers sulfur from IscS to the molybdenum cofactor prior to its insertion into FDH. This is Sulfur carrier protein FdhD from Methanothermobacter thermautotrophicus (strain ATCC 29096 / DSM 1053 / JCM 10044 / NBRC 100330 / Delta H) (Methanobacterium thermoautotrophicum).